The primary structure comprises 244 residues: 2-C-methyl-D-erythritol 4-phosphate cytidylyltransferase (244 aa).

This sequence belongs to the IspD/TarI cytidylyltransferase family. IspD subfamily.

The catalysed reaction is 2-C-methyl-D-erythritol 4-phosphate + CTP + H(+) = 4-CDP-2-C-methyl-D-erythritol + diphosphate. Its pathway is isoprenoid biosynthesis; isopentenyl diphosphate biosynthesis via DXP pathway; isopentenyl diphosphate from 1-deoxy-D-xylulose 5-phosphate: step 2/6. Catalyzes the formation of 4-diphosphocytidyl-2-C-methyl-D-erythritol from CTP and 2-C-methyl-D-erythritol 4-phosphate (MEP). In Prosthecochloris aestuarii (strain DSM 271 / SK 413), this protein is 2-C-methyl-D-erythritol 4-phosphate cytidylyltransferase.